A 665-amino-acid polypeptide reads, in one-letter code: Translation factor guf1, mitochondrial (665 aa).

Residues 1 to 53 constitute a mitochondrion transit peptide; the sequence is MRGCLQVLRWLSTSPARRPVSSGLRLRSYEIVSPSILRPFTSTVRRQAQASRN. Positions 67-247 constitute a tr-type G domain; that stretch reads ERFRNFCIVA…TVIERIPAPV (181 aa). GTP-binding positions include 76–83, 140–144, and 194–197; these read AHVDHGKS, DTPGH, and NKVD.

The protein belongs to the TRAFAC class translation factor GTPase superfamily. Classic translation factor GTPase family. LepA subfamily.

It is found in the mitochondrion inner membrane. It carries out the reaction GTP + H2O = GDP + phosphate + H(+). Functionally, promotes mitochondrial protein synthesis. May act as a fidelity factor of the translation reaction, by catalyzing a one-codon backward translocation of tRNAs on improperly translocated ribosomes. Binds to mitochondrial ribosomes in a GTP-dependent manner. This Talaromyces stipitatus (strain ATCC 10500 / CBS 375.48 / QM 6759 / NRRL 1006) (Penicillium stipitatum) protein is Translation factor guf1, mitochondrial (guf1).